The following is a 521-amino-acid chain: MKSQGQHWYSSSDKNCKVSFREKLLIIDSNLGVQDVENLKFLCIGLVPNKKLEKSSSASDVFEHLLAEDLLSEEDPFFLAELLYIIRQKKLLQHLNCTKEEVERLLPTRQRVSLFRNLLYELSEGIDSENLKDMIFLLKDSLPKTEMTSLSFLAFLEKQGKIDEDNLTCLEDLCKTVVPKLLRNIEKYKREKAIQIVTPPVDKEAESYQGEEELVSQTDVKTFLEALPQESWQNKHAGSNGNRATNGAPSLVSRGMQGASANTLNSETSTKRAAVYRMNRNHRGLCVIVNNHSFTSLKDRQGTHKDAEILSHVFQWLGFTVHIHNNVTKVEMEMVLQKQKCNPAHADGDCFVFCILTHGRFGAVYSSDEALIPIREIMSHFTALQCPRLAEKPKLFFIQACQGEEIQPSVSIEADALNPEQAPTSLQDSIPAEADFLLGLATVPGYVSFRHVEEGSWYIQSLCNHLKKLVPRMLKFLEKTMEIRGRKRTVWGAKQISATSLPTAISAQTPRPPMRRWSSVS.

Positions 1–219 (MKSQGQHWYS…GEEELVSQTD (219 aa)) are excised as a propeptide. 2 DED domains span residues 19–97 (SFRE…HLNC) and 114–187 (LFRN…NIEK). Polar residues-rich tracts occupy residues 231–248 (SWQN…TNGA) and 259–268 (ASANTLNSET). The disordered stretch occupies residues 231–269 (SWQNKHAGSNGNRATNGAPSLVSRGMQGASANTLNSETS). Catalysis depends on residues His-358 and Cys-401.

This sequence belongs to the peptidase C14A family. As to quaternary structure, heterotetramer that consists of two anti-parallel arranged heterodimers, each one formed by a 23/17 kDa (p23/17) (depending on the splicing events) and a 12 kDa (p12) subunit. Self-associates. Interacts with FADD and CASP8. Found in a Fas signaling complex consisting of FAS, FADD, CASP8 and CASP10. Interacts with RFFL and RNF34; negatively regulate CASP10 through proteasomal degradation. Interacts with RIOK3. In terms of processing, cleavage by granzyme B and autocatalytic activity generate the two active subunits. Detectable in most tissues. Lowest expression is seen in brain, kidney, prostate, testis and colon.

The enzyme catalyses Strict requirement for Asp at position P1 and has a preferred cleavage sequence of Leu-Gln-Thr-Asp-|-Gly.. Involved in the activation cascade of caspases responsible for apoptosis execution. Recruited to both Fas- and TNFR-1 receptors in a FADD dependent manner. May participate in the granzyme B apoptotic pathways. Cleaves and activates effector caspases CASP3, CASP4, CASP6, CASP7, CASP8 and CASP9. Hydrolyzes the small- molecule substrates, Tyr-Val-Ala-Asp-|-AMC and Asp-Glu-Val-Asp-|-AMC. Its function is as follows. Isoform 7 can enhance NF-kappaB activity but promotes only slight apoptosis. In terms of biological role, isoform C is proteolytically inactive. This chain is Caspase-10 (CASP10), found in Homo sapiens (Human).